Reading from the N-terminus, the 604-residue chain is MSWLLGRNRQQPQPDQTAGFSEGGGAADPEGRTAGEKSGDSQLSRAERKAMEAYRFDSSALERAADAAKTLERSKHAREALELSKMQEATRQTEYNTKVKEYEAHIEQAKVEQKRIDHEERRKTLIEETKQQQQRAQYQDQLSRKRYEDQLLQQQRVQEENLRKQEESVQRQEAMRRQTIEHEIEMKEKNRLKLLEHELRAKARVDRENRDINLEKIRLKAQEHRTTVLEGIKTAGTVIGAGAEAMLTDWDKVLTAAGGLSLLALGVYTAKGATGVVSRYVEARIGKPTLVGETSRFAFLDALKNPLHYLKRLRAKPTDALQGVVLNPKLEERLRDIAIATKNTRINKGMYRNVLMHGPPGTGKTMFAKKLAEHSGMDFAIMTGGDVAPMGKEGVTAIHKVFDWSHTSRRGLLLFVDEADAFLRKRSSEKISEDLRAALNAFLYRTSEQNPKFMLVLASNTPEQFDYAINDRLDEMVEFTLPGLEERERLLRLYFDKYVLQPAAAGAKRFKLDTFDYGKTCSKMAALCEGMSGREISKLGVSWQAAVYASEDGLLTEKMVLDRCYSAAQQHKQKMAWLSDQERADHKSITGTAAPPLTLTAKKL.

Positions 1–50 (MSWLLGRNRQQPQPDQTAGFSEGGGAADPEGRTAGEKSGDSQLSRAERKA) are disordered. The segment covering 8 to 19 (NRQQPQPDQTAG) has biased composition (polar residues). The segment covering 29-50 (PEGRTAGEKSGDSQLSRAERKA) has biased composition (basic and acidic residues). Positions 62-221 (ERAADAAKTL…INLEKIRLKA (160 aa)) form a coiled coil. Residue 358–365 (GPPGTGKT) participates in ATP binding.

Can form homooligomers.

The protein localises to the mitochondrion inner membrane. It localises to the mitochondrion matrix. Its subcellular location is the mitochondrion nucleoid. In terms of biological role, required to maintain the proper number of mitochondria in neurons and muscles. The chain is ATPase family AAA domain-containing protein 3A homolog from Drosophila melanogaster (Fruit fly).